A 617-amino-acid polypeptide reads, in one-letter code: UvrABC system protein C (617 aa).

Residues 22–100 (KLPGVYRFFD…IKALSPKYNI (79 aa)) enclose the GIY-YIG domain. Residues 209–244 (DELTRTLQHKMQTAAANLQFEEAARYRDQIQALGIM) form the UVR domain.

Belongs to the UvrC family. In terms of assembly, interacts with UvrB in an incision complex.

Its subcellular location is the cytoplasm. Functionally, the UvrABC repair system catalyzes the recognition and processing of DNA lesions. UvrC both incises the 5' and 3' sides of the lesion. The N-terminal half is responsible for the 3' incision and the C-terminal half is responsible for the 5' incision. In Neisseria meningitidis serogroup A / serotype 4A (strain DSM 15465 / Z2491), this protein is UvrABC system protein C.